We begin with the raw amino-acid sequence, 259 residues long: Thiazole synthase (259 aa).

Lys-99 acts as the Schiff-base intermediate with DXP in catalysis. Residues Gly-161, 187-188, and 209-210 contribute to the 1-deoxy-D-xylulose 5-phosphate site; these read AG and NT.

The protein belongs to the ThiG family. In terms of assembly, homotetramer. Forms heterodimers with either ThiH or ThiS.

The protein localises to the cytoplasm. The enzyme catalyses [ThiS sulfur-carrier protein]-C-terminal-Gly-aminoethanethioate + 2-iminoacetate + 1-deoxy-D-xylulose 5-phosphate = [ThiS sulfur-carrier protein]-C-terminal Gly-Gly + 2-[(2R,5Z)-2-carboxy-4-methylthiazol-5(2H)-ylidene]ethyl phosphate + 2 H2O + H(+). It functions in the pathway cofactor biosynthesis; thiamine diphosphate biosynthesis. In terms of biological role, catalyzes the rearrangement of 1-deoxy-D-xylulose 5-phosphate (DXP) to produce the thiazole phosphate moiety of thiamine. Sulfur is provided by the thiocarboxylate moiety of the carrier protein ThiS. In vitro, sulfur can be provided by H(2)S. The sequence is that of Thiazole synthase from Nitratiruptor sp. (strain SB155-2).